The primary structure comprises 126 residues: Fluoride-specific ion channel FluC 2 (126 aa).

A run of 4 helical transmembrane segments spans residues Met7–Ile27, Leu37–Phe57, Tyr65–Ser85, and Ala101–Gly121. Residues Gly79 and Thr82 each contribute to the Na(+) site.

Belongs to the fluoride channel Fluc/FEX (TC 1.A.43) family.

It localises to the cell inner membrane. It catalyses the reaction fluoride(in) = fluoride(out). With respect to regulation, na(+) is not transported, but it plays an essential structural role and its presence is essential for fluoride channel function. Fluoride-specific ion channel. Important for reducing fluoride concentration in the cell, thus reducing its toxicity. This chain is Fluoride-specific ion channel FluC 2, found in Yersinia pseudotuberculosis serotype I (strain IP32953).